Here is a 508-residue protein sequence, read N- to C-terminus: Steroid 17-alpha-hydroxylase/17,20 lyase (508 aa).

Residue asparagine 202 participates in substrate binding. Cysteine 442 is a heme binding site.

Belongs to the cytochrome P450 family. It depends on heme as a cofactor. Post-translationally, phosphorylation is necessary for 17,20-lyase, but not for 17-alpha-hydroxylase activity.

The protein localises to the endoplasmic reticulum membrane. It is found in the microsome membrane. The catalysed reaction is a C21-steroid + reduced [NADPH--hemoprotein reductase] + O2 = a 17alpha-hydroxy-C21-steroid + oxidized [NADPH--hemoprotein reductase] + H2O + H(+). It catalyses the reaction progesterone + reduced [NADPH--hemoprotein reductase] + O2 = 17alpha-hydroxyprogesterone + oxidized [NADPH--hemoprotein reductase] + H2O + H(+). It carries out the reaction pregnenolone + reduced [NADPH--hemoprotein reductase] + O2 = 17alpha-hydroxypregnenolone + oxidized [NADPH--hemoprotein reductase] + H2O + H(+). The enzyme catalyses 17alpha-hydroxyprogesterone + reduced [NADPH--hemoprotein reductase] + O2 = androst-4-ene-3,17-dione + acetate + oxidized [NADPH--hemoprotein reductase] + H2O + 2 H(+). The catalysed reaction is 17alpha-hydroxyprogesterone + reduced [NADPH--hemoprotein reductase] + O2 = 16alpha,17alpha-dihydroxyprogesterone + oxidized [NADPH--hemoprotein reductase] + H2O + H(+). It catalyses the reaction 16alpha,17alpha-dihydroxyprogesterone + reduced [NADPH--hemoprotein reductase] + O2 = 6beta,16alpha,17alpha-trihydroxyprogesterone + oxidized [NADPH--hemoprotein reductase] + H2O + H(+). It carries out the reaction 17alpha-hydroxypregnenolone + reduced [NADPH--hemoprotein reductase] + O2 = 3beta-hydroxyandrost-5-en-17-one + acetate + oxidized [NADPH--hemoprotein reductase] + H2O + 2 H(+). The enzyme catalyses 16alpha,17alpha-dihydroxypregnenolone + reduced [NADPH--hemoprotein reductase] + O2 = 3beta,16alpha-dihydroxy-androst-5-en-17-one + acetate + oxidized [NADPH--hemoprotein reductase] + H2O + 2 H(+). The catalysed reaction is 3beta-hydroxyandrost-5-en-17-one + reduced [NADPH--hemoprotein reductase] + O2 = 3beta,16alpha-dihydroxy-androst-5-en-17-one + oxidized [NADPH--hemoprotein reductase] + H2O + H(+). It catalyses the reaction androst-4-ene-3,17-dione + reduced [NADPH--hemoprotein reductase] + O2 = 16alpha-hydroxyandrost-4-ene-3,17-dione + oxidized [NADPH--hemoprotein reductase] + H2O + H(+). Its pathway is steroid hormone biosynthesis. It participates in steroid biosynthesis; glucocorticoid biosynthesis. With respect to regulation, regulated predominantly by intracellular cAMP levels. The 17,20-lyase activity is stimulated by cytochrome b5, which acts as an allosteric effector increasing the Vmax of the lyase activity. Functionally, a cytochrome P450 monooxygenase involved in corticoid and androgen biosynthesis. Catalyzes 17-alpha hydroxylation of C21 steroids, which is common for both pathways. A second oxidative step, required only for androgen synthesis, involves an acyl-carbon cleavage. The 17-alpha hydroxy intermediates, as part of adrenal glucocorticoids biosynthesis pathway, are precursors of cortisol. Hydroxylates steroid hormones, pregnenolone and progesterone to form 17-alpha hydroxy metabolites, followed by the cleavage of the C17-C20 bond to form C19 steroids, dehydroepiandrosterone (DHEA) and androstenedione. Has 16-alpha hydroxylase activity. Catalyzes 16-alpha hydroxylation of 17-alpha hydroxy pregnenolone, followed by the cleavage of the C17-C20 bond to form 16-alpha-hydroxy DHEA. Also 16-alpha hydroxylates androgens, relevant for estriol synthesis. Mechanistically, uses molecular oxygen inserting one oxygen atom into a substrate, and reducing the second into a water molecule, with two electrons provided by NADPH via cytochrome P450 reductase (CPR; NADPH-ferrihemoprotein reductase). The sequence is that of Steroid 17-alpha-hydroxylase/17,20 lyase from Homo sapiens (Human).